Here is a 99-residue protein sequence, read N- to C-terminus: Protein SPIRAL1-like 5 (99 aa).

Residues 1–12 are compositionally biased toward gly residues; the sequence is MSRGGSFGGGQS. Positions 1–99 are disordered; it reads MSRGGSFGGG…SSLGYLFGDK (99 aa). Over residues 27–39 the composition is skewed to pro residues; that stretch reads TPAPPVAPKPAPP. A compositionally biased stretch (polar residues) spans 56 to 73; it reads KISNNNYQRVQGQNSGNF. Ser-58 carries the phosphoserine modification.

The protein belongs to the SPIRAL1 family. As to expression, expressed exclusively in stems and flowers.

Functionally, acts redundantly with SPR1 in maintaining the cortical microtubules organization essential for anisotropic cell growth. This is Protein SPIRAL1-like 5 (SP1L5) from Arabidopsis thaliana (Mouse-ear cress).